Consider the following 1353-residue polypeptide: DNA-directed RNA polymerase subunit beta' (1353 aa).

Residues 1–117 (MSDNRLFTSV…AFQKLNDLFK (117 aa)) form a unknown region. A DNA-directed RNA polymerase subunit beta' region spans residues 118–1353 (LYNHFPSISS…SELTKKTNQN (1236 aa)). Zn(2+)-binding residues include Cys189, Cys191, Cys203, and Cys206. Positions 578, 580, and 582 each coordinate Mg(2+).

This sequence belongs to the RNA polymerase beta' chain family. As to quaternary structure, the RNAP catalytic core consists of 2 alpha, 1 beta, 1 beta' and 1 omega subunit. When a sigma factor is associated with the core the holoenzyme is formed, which can initiate transcription. It depends on Mg(2+) as a cofactor. Zn(2+) is required as a cofactor.

The enzyme catalyses RNA(n) + a ribonucleoside 5'-triphosphate = RNA(n+1) + diphosphate. Its function is as follows. DNA-dependent RNA polymerase catalyzes the transcription of DNA into RNA using the four ribonucleoside triphosphates as substrates. The sequence is that of DNA-directed RNA polymerase subunit beta' from Aster yellows witches'-broom phytoplasma (strain AYWB).